Here is a 520-residue protein sequence, read N- to C-terminus: Probable cytosol aminopeptidase (520 aa).

Lys232 and Asp237 together coordinate Mn(2+). The active site involves Lys244. 3 residues coordinate Mn(2+): Asp255, Asp314, and Glu316. Arg318 is a catalytic residue. The tract at residues 488–520 (KAKKSTAKKATTKKTTTRKTASKTKSTKSKARK) is disordered.

The protein belongs to the peptidase M17 family. Requires Mn(2+) as cofactor.

It is found in the cytoplasm. It carries out the reaction Release of an N-terminal amino acid, Xaa-|-Yaa-, in which Xaa is preferably Leu, but may be other amino acids including Pro although not Arg or Lys, and Yaa may be Pro. Amino acid amides and methyl esters are also readily hydrolyzed, but rates on arylamides are exceedingly low.. The enzyme catalyses Release of an N-terminal amino acid, preferentially leucine, but not glutamic or aspartic acids.. Functionally, presumably involved in the processing and regular turnover of intracellular proteins. Catalyzes the removal of unsubstituted N-terminal amino acids from various peptides. In Metamycoplasma salivarium (Mycoplasma salivarium), this protein is Probable cytosol aminopeptidase (pepA).